Reading from the N-terminus, the 102-residue chain is Putative UPF0320 protein YMR326C (102 aa).

The protein belongs to the UPF0320 family.

This chain is Putative UPF0320 protein YMR326C, found in Saccharomyces cerevisiae (strain ATCC 204508 / S288c) (Baker's yeast).